Reading from the N-terminus, the 429-residue chain is GTPase Obg (429 aa).

One can recognise an Obg domain in the interval 1–158 (MFVDQVKIYV…RNVQLELKVL (158 aa)). A disordered region spans residues 124-145 (RGNKRFATPANPAPELSENGEP). The OBG-type G domain maps to 159 to 329 (ADVGLVGFPS…LLLAIADKLE (171 aa)). GTP contacts are provided by residues 165–172 (GFPSVGKS), 190–194 (FTTIV), 212–215 (DLPG), 282–285 (NKMD), and 310–312 (SAV). Serine 172 and threonine 192 together coordinate Mg(2+). Positions 351–429 (KYVAEEPDFE…LLDYEFEFMD (79 aa)) constitute an OCT domain.

This sequence belongs to the TRAFAC class OBG-HflX-like GTPase superfamily. OBG GTPase family. As to quaternary structure, monomer. Mg(2+) is required as a cofactor.

The protein resides in the cytoplasm. An essential GTPase which binds GTP, GDP and possibly (p)ppGpp with moderate affinity, with high nucleotide exchange rates and a fairly low GTP hydrolysis rate. Plays a role in control of the cell cycle, stress response, ribosome biogenesis and in those bacteria that undergo differentiation, in morphogenesis control. This Listeria monocytogenes serotype 4b (strain F2365) protein is GTPase Obg.